A 368-amino-acid chain; its full sequence is Germination protease (368 aa).

A propeptide spanning residues Met1–Asp16 is cleaved from the precursor.

It belongs to the peptidase A25 family. As to quaternary structure, homotetramer. Post-translationally, autoproteolytically processed. The inactive tetrameric zymogen termed p46 autoprocesses to a smaller form termed p41, which is active only during spore germination.

The enzyme catalyses Endopeptidase action with P4 Glu or Asp, P1 preferably Glu &gt; Asp, P1' hydrophobic and P2' Ala.. Its function is as follows. Initiates the rapid degradation of small, acid-soluble proteins during spore germination. The chain is Germination protease from Bacillus licheniformis (strain ATCC 14580 / DSM 13 / JCM 2505 / CCUG 7422 / NBRC 12200 / NCIMB 9375 / NCTC 10341 / NRRL NRS-1264 / Gibson 46).